Reading from the N-terminus, the 457-residue chain is uncharacterized protein (457 aa).

Lys75 bears the N6-(pyridoxal phosphate)lysine mark.

It depends on pyridoxal 5'-phosphate as a cofactor.

This is an uncharacterized protein from Sinorhizobium fredii (strain NBRC 101917 / NGR234).